Here is a 41-residue protein sequence, read N- to C-terminus: Antimicrobial protein PN-AMP1 (41 aa).

Glutamine 1 carries the pyrrolidone carboxylic acid modification. The Chitin-binding type-1 domain occupies 1-41 (QQCGRQASGRLCGNRLCCSQWGYCGSTASYCGAGCQSQCRS). Disulfide bonds link cysteine 3–cysteine 18, cysteine 12–cysteine 24, cysteine 17–cysteine 31, and cysteine 35–cysteine 39.

In terms of biological role, chitin-binding protein with a defensive function against numerous chitin containing fungal pathogens. It is also an inhibitor of Gram-positive bacteria such as B.subtilis. The polypeptide is Antimicrobial protein PN-AMP1 (Ipomoea nil (Japanese morning glory)).